A 1070-amino-acid chain; its full sequence is MLGDGNEGISTIPGFNQIQFEGFCRFIDQGLTEELYKFPKIEDTDQEIEFQLFVETYQLVEPLIKERDAVYESLTYSSELYVSAGLIWKNSRDMQEQTIFIGNIPLMNSLGTSIVNGIYRIVINQILQSPGIYYRSELDHNGISVYTGTIISDWGGRSELEIDRKARIWARVSRKQKISILVLSSAMGLNLREILENVCYPEIFLSFLSDKERKKIGSKENAILEFYQQFACVGGDPVFSESLCKELQKKFFQQRCELGRIGRRNMNRRLNLDIPQNNTFLLPRDILAAADHLIGLKFGMGALDDMNHLKNKRIRSVADLLQDQFGLALVRLENVVRGTICGAIRHKLIPTPQNLVTSTPLTTTYESFFGLHPLSQVLDRTNPLTQIVHGRKLSYLGPGGLTGRTASFRIRDIHPSHYGRICPIDTSEGINVGLIGSLAIHARIGHWGSLESPFYEISERSTGVRMLYLSPGRDEYYMVAAGNSLALNQDIQEEQVVPARYRQEFLTIAWEQVHLRSIFPFQYFSIGASLIPFIEHNDANRALMSSNMQRQAVPLSRSEKCIVGTGLERQAALDSGALAIAEREGRVVYTNTDKILLAGNGDILSIPLVIYQRSNKNTCMHQKLQVPRGKCIKKGQILADGAATVGGELALGKNVLVAYMPWEGYNSEDAVLISERLVYEDIYTSFHIRKYEIQTHVTSQGPEKVTNEIPHLEAHLLRNLDKNGIVMLGSWVETGDILVGKLTPQVVKESSYAPEDRLLRAILGIQVSTSKETCLKLPIGGRGRVIDVRWIQKRGGSSYNPETIRVYILQKREIKVGDKVAGRHGNKGIISKILPRQDMPYLQDGRSVDMVFNPLGVPSRMNVGQIFECSLGLAGSLLDRHYRIAPFDERYEQEASRKLVFSELYEASKQTANPWVFEPEYPGKSRIFDGRTGNPFEQPVIIGKPYILKLIHQVDDKIHGRSSGHYALVTQQPLRGRAKQGGQRVGEMEVWALEGFGVAHILQEMLTYKSDHIRARQEVLGTTIIGGTIPNPEDAPESFRLLVRELRSLALELNHFLVSEKNFQINRKEA.

Belongs to the RNA polymerase beta chain family. As to quaternary structure, in plastids the minimal PEP RNA polymerase catalytic core is composed of four subunits: alpha, beta, beta', and beta''. When a (nuclear-encoded) sigma factor is associated with the core the holoenzyme is formed, which can initiate transcription.

The protein localises to the plastid. It is found in the chloroplast. The enzyme catalyses RNA(n) + a ribonucleoside 5'-triphosphate = RNA(n+1) + diphosphate. Functionally, DNA-dependent RNA polymerase catalyzes the transcription of DNA into RNA using the four ribonucleoside triphosphates as substrates. The protein is DNA-directed RNA polymerase subunit beta of Nicotiana sylvestris (Wood tobacco).